Here is a 179-residue protein sequence, read N- to C-terminus: Peptidyl-prolyl cis-trans isomerase A (179 aa).

The 164-residue stretch at 15–178 (FFDITIGGVE…KPVVIANCGQ (164 aa)) folds into the PPIase cyclophilin-type domain.

Belongs to the cyclophilin-type PPIase family.

Its subcellular location is the cytoplasm. It is found in the cytosol. The catalysed reaction is [protein]-peptidylproline (omega=180) = [protein]-peptidylproline (omega=0). Its activity is regulated as follows. Binds cyclosporin A (CsA). CsA mediates some of its effects via an inhibitory action on PPIase. Its function is as follows. PPIase that catalyzes the cis-trans isomerization of proline imidic peptide bonds in oligopeptides and may therefore assist protein folding. The sequence is that of Peptidyl-prolyl cis-trans isomerase A (ppiA) from Dictyostelium discoideum (Social amoeba).